The following is a 400-amino-acid chain: uncharacterized protein (400 aa).

Basic and acidic residues predominate over residues S112–L126. Positions S112–K151 are disordered.

This is an uncharacterized protein from Homo sapiens (Human).